The sequence spans 158 residues: Large ribosomal subunit protein uL30 (158 aa).

It belongs to the universal ribosomal protein uL30 family. In terms of assembly, part of the 50S ribosomal subunit.

The polypeptide is Large ribosomal subunit protein uL30 (Saccharolobus islandicus (strain Y.N.15.51 / Yellowstone #2) (Sulfolobus islandicus)).